The following is a 230-amino-acid chain: CDP-diacylglycerol--inositol 3-phosphatidyltransferase (230 aa).

Topologically, residues 1-28 (MPSAKSSDLSPTKTNLESTTKQKVSVQD) are cytoplasmic. Residues 29–51 (IFLYIPNLIGYLRIITAIISFLC) form a helical membrane-spanning segment. The Lumenal portion of the chain corresponds to 52–57 (MANHPV). A helical transmembrane segment spans residues 58–77 (ATLIFYGISGFLDAFDGYAA). Positions 70 and 73 each coordinate Mg(2+). G74, R78, and T84 together coordinate a CDP-1,2-diacyl-sn-glycerol. The Cytoplasmic segment spans residues 78–89 (RKFNQGTRFGAV). The chain crosses the membrane as a helical span at residues 90-110 (LDMVTDRCATSSLIVYLGVLY). Residues D91 and D95 each contribute to the Mg(2+) site. The Proton acceptor role is filled by D95. The Lumenal segment spans residues 111–112 (PQ). The chain crosses the membrane as a helical span at residues 113 to 133 (YTVFWQILVSLDLSSHYMHMY). The Cytoplasmic portion of the chain corresponds to 134 to 161 (AMLSAGSTSHKNVDETQSKLLSLYYNNR). The helical transmembrane segment at 162 to 182 (LVLFFVCLINELFYMAVYLHY) threads the bilayer. Residues 183 to 184 (YK) are Lumenal-facing. Residues 185–205 (FFWLGTVMLVASTPIWLFKQI) traverse the membrane as a helical segment. At 206-230 (ANIIQLKNASLILARMDAHDHSKRD) the chain is on the cytoplasmic side.

The protein belongs to the CDP-alcohol phosphatidyltransferase class-I family. Requires Mn(2+) as cofactor. The cofactor is Mg(2+).

Its subcellular location is the endoplasmic reticulum membrane. It catalyses the reaction a CDP-1,2-diacyl-sn-glycerol + myo-inositol = a 1,2-diacyl-sn-glycero-3-phospho-(1D-myo-inositol) + CMP + H(+). With respect to regulation, inhibited by calcium and zinc ions. Inhibited by nucleoside triphosphates and diphosphates. Catalyzes the synthesis of phosphatidylinositol (PtdIns). Required for proper membrane dynamics and cell wall integrity. This is CDP-diacylglycerol--inositol 3-phosphatidyltransferase from Candida albicans (strain SC5314 / ATCC MYA-2876) (Yeast).